Reading from the N-terminus, the 576-residue chain is MSEEAAYQEDTAVQNTPADALSPVESDSNSALSTPSNKAERDDMKDFDENHEESNNYVEIPKKPASAYVTVSICCLMVAFGGFVFGWDTGTISGFVAQTDFIRRFGMKHHDGTYYLSKVRTGLIVSIFNIGCAIGGIILARLGDMYGRKMGLIVVVVIYIIGIIIQIASINKWYQYFIGRIISGLGVGGIAVLSPMLISEVSPKHIRGTLVSCYQLMITLGIFLGYCTNYGTKTYTNSVQWRVPLGLGFAWALFMIGGMTFVPESPRYLVEVGKIEEAKRSIALSNKVSADDPAVMAEVEVVQATVEAEKLAGNASWGEIFSTKTKVFQRLIMGAMIQSLQQLTGDNYFFYYGTTVFTAVGLEDSFETSIVLGIVNFASTFVGIFLVERYGRRRCLLWGAASMTACMVVFASVGVTRLWPNGKKNGSSKGAGNCMIVFTCFYLFCFATTWAPIPFVVNSETFPLRVKSKCMAIAQACNWIWGFLIGFFTPFISGAIDFYYGYVFMGCLVFSYFYVFFFVPETKGLTLEEVNTLWEEGVLPWKSPSWVPPNKRGTDYNADDLMHDDQPFYKKMFGKK.

The disordered stretch occupies residues 1–56 (MSEEAAYQEDTAVQNTPADALSPVESDSNSALSTPSNKAERDDMKDFDENHEESNN). Residues 1 to 66 (MSEEAAYQED…YVEIPKKPAS (66 aa)) lie on the Cytoplasmic side of the membrane. Polar residues predominate over residues 25–37 (ESDSNSALSTPSN). The segment covering 38-54 (KAERDDMKDFDENHEES) has biased composition (basic and acidic residues). Lysine 45 participates in a covalent cross-link: Glycyl lysine isopeptide (Lys-Gly) (interchain with G-Cter in ubiquitin). Residues 67-87 (AYVTVSICCLMVAFGGFVFGW) form a helical membrane-spanning segment. The Extracellular segment spans residues 88–122 (DTGTISGFVAQTDFIRRFGMKHHDGTYYLSKVRTG). Residues 123 to 143 (LIVSIFNIGCAIGGIILARLG) form a helical membrane-spanning segment. Residues 144 to 149 (DMYGRK) lie on the Cytoplasmic side of the membrane. A helical membrane pass occupies residues 150 to 170 (MGLIVVVVIYIIGIIIQIASI). The Extracellular segment spans residues 171-180 (NKWYQYFIGR). A helical transmembrane segment spans residues 181–201 (IISGLGVGGIAVLSPMLISEV). Residues 202–207 (SPKHIR) are Cytoplasmic-facing. Residues 208 to 228 (GTLVSCYQLMITLGIFLGYCT) form a helical membrane-spanning segment. Residues 229–242 (NYGTKTYTNSVQWR) lie on the Extracellular side of the membrane. The chain crosses the membrane as a helical span at residues 243–263 (VPLGLGFAWALFMIGGMTFVP). Over 264-346 (ESPRYLVEVG…IQSLQQLTGD (83 aa)) the chain is Cytoplasmic. Residues 347 to 363 (NYFFYYGTTVFTAVGLE) form a helical membrane-spanning segment. The Extracellular segment spans residues 364–369 (DSFETS). Residues 370–387 (IVLGIVNFASTFVGIFLV) form a helical membrane-spanning segment. Residues 388-394 (ERYGRRR) lie on the Cytoplasmic side of the membrane. A helical membrane pass occupies residues 395–415 (CLLWGAASMTACMVVFASVGV). The Extracellular segment spans residues 416-437 (TRLWPNGKKNGSSKGAGNCMIV). The N-linked (GlcNAc...) asparagine glycan is linked to asparagine 425. Residues 438–458 (FTCFYLFCFATTWAPIPFVVN) form a helical membrane-spanning segment. Topologically, residues 459-475 (SETFPLRVKSKCMAIAQ) are cytoplasmic. A helical transmembrane segment spans residues 476–496 (ACNWIWGFLIGFFTPFISGAI). Aspartate 497 is a topological domain (extracellular). Residues 498-518 (FYYGYVFMGCLVFSYFYVFFF) traverse the membrane as a helical segment. At 519–576 (VPETKGLTLEEVNTLWEEGVLPWKSPSWVPPNKRGTDYNADDLMHDDQPFYKKMFGKK) the chain is on the cytoplasmic side.

The protein belongs to the major facilitator superfamily. Sugar transporter (TC 2.A.1.1) family.

It is found in the cell membrane. Xylose uptake is strongly inhibited by glucose. Low-affinity glucose transporter. Can also transport xylose. The polypeptide is Low-affinity glucose transporter HXT4 (HXT4) (Saccharomyces cerevisiae (strain YJM789) (Baker's yeast)).